A 329-amino-acid chain; its full sequence is Protein SPATA31F3 (329 aa).

Residues Val11 to Val31 form a helical membrane-spanning segment. Residues Ser58–Gln85 are a coiled coil. Disordered stretches follow at residues Ala149 to Thr184, Gln201 to Thr250, and Lys288 to Ile329. 2 positions are modified to phosphoserine: Ser152 and Ser153. 2 stretches are compositionally biased toward polar residues: residues Glu154–Thr184 and Gln201–Asp223. The span at Gln232–Ala242 shows a compositional bias: basic residues. Residues Glu293–Ala320 are compositionally biased toward basic and acidic residues.

The protein belongs to the SPATA31 family.

Its subcellular location is the membrane. In Rattus norvegicus (Rat), this protein is Protein SPATA31F3.